Here is a 757-residue protein sequence, read N- to C-terminus: Exo-alpha-(1-&gt;6)-L-arabinopyranosidase (757 aa).

The active site involves D232.

It belongs to the glycosyl hydrolase 3 family. As to quaternary structure, homotetramer.

With respect to regulation, completely inhibited by Cu(2+) and Fe(2+). In terms of biological role, catalyzes the hydrolysis of a non-reducing terminal alpha-L-arabinopyranosidic linkage in ginsenoside Rb2 (alpha-L-arabinopyranosyl-(1-&gt;6)-alpha-D-glucopyranosyl) to release alpha-D-glucopyranosyl (Rd). It is not able to hydrolyze alpha-L-arabinofuranosyl-(1-&gt;6)-alpha-D-glucopyranosyl (Rc). This is Exo-alpha-(1-&gt;6)-L-arabinopyranosidase from Bifidobacterium breve (strain ACS-071-V-Sch8b).